The primary structure comprises 160 residues: Prostaglandin E synthase 3 (160 aa).

The 90-residue stretch at 1 to 90 folds into the CS domain; that stretch reads MQPASAKWYD…ESGQSWPRLT (90 aa). Lys-33 carries the N6-acetyllysine modification. Lys-35 is covalently cross-linked (Glycyl lysine isopeptide (Lys-Gly) (interchain with G-Cter in SUMO2)). Ser-44 is subject to Phosphoserine. Residue Lys-65 forms a Glycyl lysine isopeptide (Lys-Gly) (interchain with G-Cter in SUMO2) linkage. Phosphoserine is present on residues Ser-85, Ser-100, Ser-113, Ser-118, Ser-148, and Ser-151. The disordered stretch occupies residues 124–160; the sequence is SEMMNNMGGDEDVDLPEVDGADDDSQDSDDEKMPDLE. The span at 132-153 shows a compositional bias: acidic residues; it reads GDEDVDLPEVDGADDDSQDSDD. The PXLE motif signature appears at 157–160; that stretch reads PDLE.

This sequence belongs to the p23/wos2 family. In terms of assembly, probably forms a complex composed of chaperones HSP90 and HSP70, co-chaperones STIP1/HOP, CDC37, PPP5C, PTGES3/p23, TSC1 and client protein TSC2. Binds to the progesterone receptor. Interacts with TERT; the interaction, together with HSP90AA1, is required for correct assembly and stabilization of the telomerase holoenzyme complex. Interacts (via PXLE motif) with EGLN1/PHD2, recruiting EGLN1/PHD2 to the HSP90 pathway to facilitate HIF alpha proteins hydroxylation. Interacts with HSP90AA1, FLCN, FNIP1 and FNIP2. In terms of processing, proteolytically cleaved by caspase-7 (CASP7) in response to apoptosis, leading to its inactivation. As to expression, detected in testis and ovary, at lower levels in endometrium, myometrium, kidney and lung, and only faintly in spleen, heart and muscle (at protein level). Expressed at high levels in glandular and luminal epithelial cells of the endometrium, but also detected in stromal cells (at protein level).

Its subcellular location is the cytoplasm. The catalysed reaction is prostaglandin H2 = prostaglandin E2. Its pathway is lipid metabolism; prostaglandin biosynthesis. In terms of biological role, cytosolic prostaglandin synthase that catalyzes the oxidoreduction of prostaglandin endoperoxide H2 (PGH2) to prostaglandin E2 (PGE2). Molecular chaperone that localizes to genomic response elements in a hormone-dependent manner and disrupts receptor-mediated transcriptional activation, by promoting disassembly of transcriptional regulatory complexes. Facilitates HIF alpha proteins hydroxylation via interaction with EGLN1/PHD2, leading to recruit EGLN1/PHD2 to the HSP90 pathway. The chain is Prostaglandin E synthase 3 (PTGES3) from Bos taurus (Bovine).